Here is a 336-residue protein sequence, read N- to C-terminus: Ornithine carbamoyltransferase, catabolic (336 aa).

Carbamoyl phosphate-binding positions include 62–65 (STRT), glutamine 89, arginine 113, and 140–143 (HPTQ). Residues asparagine 172, aspartate 236, and 240–241 (SM) each bind L-ornithine. Carbamoyl phosphate-binding positions include 277-278 (CL) and arginine 322.

It belongs to the aspartate/ornithine carbamoyltransferase superfamily. OTCase family.

It localises to the cytoplasm. It carries out the reaction carbamoyl phosphate + L-ornithine = L-citrulline + phosphate + H(+). Its pathway is amino-acid degradation; L-arginine degradation via ADI pathway; carbamoyl phosphate from L-arginine: step 2/2. In terms of biological role, reversibly catalyzes the transfer of the carbamoyl group from carbamoyl phosphate (CP) to the N(epsilon) atom of ornithine (ORN) to produce L-citrulline. The chain is Ornithine carbamoyltransferase, catabolic (arcB) from Staphylococcus aureus (strain N315).